Consider the following 133-residue polypeptide: ATP synthase epsilon chain (133 aa).

The protein belongs to the ATPase epsilon chain family. In terms of assembly, F-type ATPases have 2 components, CF(1) - the catalytic core - and CF(0) - the membrane proton channel. CF(1) has five subunits: alpha(3), beta(3), gamma(1), delta(1), epsilon(1). CF(0) has three main subunits: a, b and c.

Its subcellular location is the cell inner membrane. Produces ATP from ADP in the presence of a proton gradient across the membrane. The chain is ATP synthase epsilon chain from Desulfosudis oleivorans (strain DSM 6200 / JCM 39069 / Hxd3) (Desulfococcus oleovorans).